Here is a 282-residue protein sequence, read N- to C-terminus: Putative 1-acyl-sn-glycerol-3-phosphate acyltransferase acl-2 (282 aa).

2 helical membrane passes run 4 to 24 (FWSI…NIST) and 32 to 52 (ISFY…TMIP). The HXXXXD motif motif lies at 98–103 (HQSSLD). The helical transmembrane segment at 122–142 (ILAYVPFFNLGAYFSNTIFID) threads the bilayer.

The protein belongs to the 1-acyl-sn-glycerol-3-phosphate acyltransferase family.

Its subcellular location is the membrane. It catalyses the reaction a 1-acyl-sn-glycero-3-phosphate + an acyl-CoA = a 1,2-diacyl-sn-glycero-3-phosphate + CoA. The protein operates within phospholipid metabolism; CDP-diacylglycerol biosynthesis; CDP-diacylglycerol from sn-glycerol 3-phosphate: step 2/3. Functionally, converts lysophosphatidic acid (LPA) into phosphatidic acid by incorporating an acyl moiety at the sn-2 position of the glycerol backbone. This is Putative 1-acyl-sn-glycerol-3-phosphate acyltransferase acl-2 (acl-2) from Caenorhabditis elegans.